The primary structure comprises 410 residues: Lissencephaly-1 homolog (410 aa).

The LisH domain occupies 7–39; sequence QRDELNRAIADYLRSNGYEEAYSVFKKEAELDV. Positions 56–82 form a coiled coil; the sequence is TSVIRLQKKVMELESKLNEAKEEFTSG. 7 WD repeats span residues 106–147, 148–187, 190–229, 232–271, 274–333, 336–377, and 378–410; these read GHRS…RTLK, GHTDSVQDISFDHTGKLLASCSADMTIKLWDFQGFECIRT, GHDHNVSSVAIMPNGDHIVSASRDKTIKMWEVQTGYCVKT, GHREWVRMVRPNQDGTLIASCSNDQTVRVWVVATKECKAE, EHEH…CLMT, GHDN…KTLN, and AHEHFVTSLDFHKTAPYVVTGSVDQTVKVWECR.

Belongs to the WD repeat LIS1/nudF family. In terms of assembly, can self-associate. Component of the cytosolic PAF-AH (I) heterotetrameric enzyme, which is composed of PAFAH1B1 (beta), PAFAH1B2 (alpha2) and PAFAH1B3 (alpha1) subunits. The catalytic activity of the enzyme resides in the alpha1 (PAFAH1B3) and alpha2 (PAFAH1B2) subunits, whereas the beta subunit (PAFAH1B1) has regulatory activity. Trimer formation is not essential for the catalytic activity. Interacts with dynein, dynactin, NDE1 and NDEL1.

It localises to the cytoplasm. The protein resides in the cytoskeleton. It is found in the microtubule organizing center. The protein localises to the centrosome. Regulatory subunit (beta subunit) of the cytosolic type I platelet-activating factor (PAF) acetylhydrolase (PAF-AH (I)), an enzyme that catalyzes the hydrolyze of the acetyl group at the sn-2 position of PAF and its analogs and participates in PAF inactivation. Regulates the PAF-AH (I) activity in a catalytic dimer composition-dependent manner. Positively regulates the activity of the minus-end directed microtubule motor protein dynein. May enhance dynein-mediated microtubule sliding by targeting dynein to the microtubule plus end. Required for several dynein- and microtubule-dependent processes such as the maintenance of Golgi integrity, the peripheral transport of microtubule fragments and the coupling of the nucleus and centrosome. May be required for proliferation of neuronal precursors and neuronal migration. The chain is Lissencephaly-1 homolog from Gallus gallus (Chicken).